The following is a 156-amino-acid chain: ATP synthase subunit b (156 aa).

Residues 7-27 (LFLQAVVFAILVWFTMKFVWP) form a helical membrane-spanning segment.

It belongs to the ATPase B chain family. In terms of assembly, F-type ATPases have 2 components, F(1) - the catalytic core - and F(0) - the membrane proton channel. F(1) has five subunits: alpha(3), beta(3), gamma(1), delta(1), epsilon(1). F(0) has three main subunits: a(1), b(2) and c(10-14). The alpha and beta chains form an alternating ring which encloses part of the gamma chain. F(1) is attached to F(0) by a central stalk formed by the gamma and epsilon chains, while a peripheral stalk is formed by the delta and b chains.

Its subcellular location is the cell inner membrane. F(1)F(0) ATP synthase produces ATP from ADP in the presence of a proton or sodium gradient. F-type ATPases consist of two structural domains, F(1) containing the extramembraneous catalytic core and F(0) containing the membrane proton channel, linked together by a central stalk and a peripheral stalk. During catalysis, ATP synthesis in the catalytic domain of F(1) is coupled via a rotary mechanism of the central stalk subunits to proton translocation. Its function is as follows. Component of the F(0) channel, it forms part of the peripheral stalk, linking F(1) to F(0). The protein is ATP synthase subunit b of Polaromonas naphthalenivorans (strain CJ2).